A 214-amino-acid chain; its full sequence is MSAVTQHHADELARGADELGVALDADKQRQLLAYLALLIKWNKAYNLTAVRDPDEMVSRHLLDSLSIVPYAEAGDNWLDVGSGGGMPGVPLAILFPEKRLTLLDSNGKKTRFLTQVKLELKLANLEVVHSRVEAFRPESPFDGIVSRAFSSLEDFANWTRHLGGQETRWLAMKGVHPNEELAALPEDFRVEAEHALAVPGCQGQRHLLILRRTA.

Residues Gly-81, Met-86, 132 to 133 (VE), and Arg-147 contribute to the S-adenosyl-L-methionine site.

The protein belongs to the methyltransferase superfamily. RNA methyltransferase RsmG family.

The protein resides in the cytoplasm. The enzyme catalyses guanosine(527) in 16S rRNA + S-adenosyl-L-methionine = N(7)-methylguanosine(527) in 16S rRNA + S-adenosyl-L-homocysteine. In terms of biological role, specifically methylates the N7 position of guanine in position 527 of 16S rRNA. This is Ribosomal RNA small subunit methyltransferase G from Pseudomonas aeruginosa (strain LESB58).